The chain runs to 349 residues: Leucine-rich repeat-containing protein 58 (349 aa).

10 LRR repeats span residues 14 to 34 (NLTH…NKRK), 35 to 56 (DVQQ…VNSF), 58 to 80 (HLHL…LGLT), 81 to 102 (KLKT…KELG), 105 to 125 (RLEV…QFLQ), 128 to 149 (TLKS…IENL), 151 to 173 (SLEF…ANLP), 174 to 195 (YLSY…LAQV), 197 to 217 (SLRS…ILSL), and 219 to 239 (QLQE…RDLT).

This is Leucine-rich repeat-containing protein 58 (lrrc58) from Xenopus tropicalis (Western clawed frog).